The chain runs to 314 residues: DNA-directed RNA polymerase subunit alpha (314 aa).

The interval 1–227 (MTTFEIECIE…ELLFPLKEIN (227 aa)) is alpha N-terminal domain (alpha-NTD). The alpha C-terminal domain (alpha-CTD) stretch occupies residues 237–314 (IEDSKINQIL…LPKEKTSKSN (78 aa)).

It belongs to the RNA polymerase alpha chain family. As to quaternary structure, in plastids the minimal PEP RNA polymerase catalytic core is composed of four subunits: alpha, beta, beta', and beta''. When a (nuclear-encoded) sigma factor is associated with the core the holoenzyme is formed, which can initiate transcription.

Its subcellular location is the plastid. It is found in the chloroplast. The enzyme catalyses RNA(n) + a ribonucleoside 5'-triphosphate = RNA(n+1) + diphosphate. In terms of biological role, DNA-dependent RNA polymerase catalyzes the transcription of DNA into RNA using the four ribonucleoside triphosphates as substrates. The polypeptide is DNA-directed RNA polymerase subunit alpha (Pyrenomonas salina).